Reading from the N-terminus, the 334-residue chain is L-lactate dehydrogenase B chain (334 aa).

The residue at position 2 (alanine 2) is an N-acetylalanine. An N6-acetyllysine modification is found at lysine 7. Serine 44 is subject to Phosphoserine. Residues 53–58 (DVLEDK) and arginine 100 each bind NAD(+). N6-acetyllysine is present on lysine 58. Arginine 107 is a substrate binding site. An N6-acetyllysine modification is found at lysine 119. Position 139 (asparagine 139) interacts with NAD(+). Substrate contacts are provided by asparagine 139 and arginine 170. The active-site Proton acceptor is the histidine 194. Tyrosine 240 bears the Phosphotyrosine mark. Substrate is bound at residue threonine 249. Position 329 is an N6-acetyllysine (lysine 329).

It belongs to the LDH/MDH superfamily. LDH family. In terms of assembly, homotetramer. Interacts with PTEN upstream reading frame protein MP31; the interaction leads to inhibition of mitochondrial lactate dehydrogenase activity, preventing conversion of lactate to pyruvate in mitochondria.

Its subcellular location is the cytoplasm. It localises to the mitochondrion inner membrane. It carries out the reaction (S)-lactate + NAD(+) = pyruvate + NADH + H(+). Its pathway is fermentation; pyruvate fermentation to lactate; (S)-lactate from pyruvate: step 1/1. Functionally, interconverts simultaneously and stereospecifically pyruvate and lactate with concomitant interconversion of NADH and NAD(+). In Bos taurus (Bovine), this protein is L-lactate dehydrogenase B chain (LDHB).